The sequence spans 345 residues: Heat-inducible transcription repressor HrcA (345 aa).

Belongs to the HrcA family.

Its function is as follows. Negative regulator of class I heat shock genes (grpE-dnaK-dnaJ and groELS operons). Prevents heat-shock induction of these operons. The polypeptide is Heat-inducible transcription repressor HrcA (Dehalococcoides mccartyi (strain ATCC BAA-2100 / JCM 16839 / KCTC 5957 / BAV1)).